We begin with the raw amino-acid sequence, 346 residues long: Protein phosphatase 1 regulatory subunit 7 (346 aa).

Residues 1 to 13 are compositionally biased toward acidic residues; that stretch reads MADEEGETEVQEM. The disordered stretch occupies residues 1–46; it reads MADEEGETEVQEMEVDRRESDESADDEAKEKPDRVDGGVKNGEVPL. Positions 14-37 are enriched in basic and acidic residues; it reads EVDRRESDESADDEAKEKPDRVDG. LRR repeat units follow at residues 63–84, 85–106, 107–128, 129–150, 151–172, 173–194, 195–216, 217–238, 239–260, 261–282, and 283–304; these read EAED…EVLK, KVKT…EQLV, TLTE…ETLR, DLQI…ESLS, HLQR…GTLT, QLRL…DSLR, ELDS…ETLT, NLTV…QNLV, NLRE…ENNN, KLTT…KHLS, and ELQE…EELS. The 30-residue stretch at 317 to 346 folds into the LRRCT domain; the sequence is NPLQKDAQYRRKIMLALPSVRQIDATFVRF.

It belongs to the SDS22 family.

The protein localises to the nucleus. In terms of biological role, regulatory subunit of protein phosphatase 1. This chain is Protein phosphatase 1 regulatory subunit 7 (ppp1r7), found in Xenopus tropicalis (Western clawed frog).